The following is a 324-amino-acid chain: tRNA dimethylallyltransferase (324 aa).

Gly17–Thr24 serves as a coordination point for ATP. Thr19 to Thr24 contacts substrate. Interaction with substrate tRNA regions lie at residues Asp42–Leu45, Gln166–Arg170, and Arg251–Arg256.

It belongs to the IPP transferase family. Monomer. The cofactor is Mg(2+).

The catalysed reaction is adenosine(37) in tRNA + dimethylallyl diphosphate = N(6)-dimethylallyladenosine(37) in tRNA + diphosphate. Catalyzes the transfer of a dimethylallyl group onto the adenine at position 37 in tRNAs that read codons beginning with uridine, leading to the formation of N6-(dimethylallyl)adenosine (i(6)A). The polypeptide is tRNA dimethylallyltransferase (Burkholderia thailandensis (strain ATCC 700388 / DSM 13276 / CCUG 48851 / CIP 106301 / E264)).